We begin with the raw amino-acid sequence, 405 residues long: Opine dehydrogenase (405 aa).

This sequence belongs to the lysopine/nopaline/octopine/opine/vitopine dehydrogenases family.

This is Opine dehydrogenase from Haliotis discus hannai (Japanese abalone).